A 328-amino-acid chain; its full sequence is Malate dehydrogenase (328 aa).

12 to 18 provides a ligand contact to NAD(+); it reads GAAGQIG. Substrate is bound by residues Arg95 and Arg101. Residues Asn108, Gln115, and 132 to 134 contribute to the NAD(+) site; that span reads VGN. Positions 134 and 165 each coordinate substrate. The active-site Proton acceptor is the His190.

The protein belongs to the LDH/MDH superfamily. MDH type 2 family.

The catalysed reaction is (S)-malate + NAD(+) = oxaloacetate + NADH + H(+). In terms of biological role, catalyzes the reversible oxidation of malate to oxaloacetate. The protein is Malate dehydrogenase of Paracidovorax citrulli (strain AAC00-1) (Acidovorax citrulli).